We begin with the raw amino-acid sequence, 978 residues long: Sensor histidine kinase TodS (978 aa).

The PAS 1 domain maps to 32–103 (CEEHARIIFD…TQKRLVETAS (72 aa)). Residues 108-162 (VRCDVEILGKSGGREVIAVDFSLLPICNEEGSIVYLLAEGRNITDKKKAEAMLAL) form the PAC 1 domain. One can recognise a Histidine kinase 1 domain in the interval 187–405 (KVSHELRTPL…LFQVKLPLNA (219 aa)). The residue at position 190 (His-190) is a Phosphohistidine; by autocatalysis. A Response regulatory domain is found at 452 to 567 (RVLIVEDNPD…ELRARVSNLV (116 aa)). Asp-500 is modified (4-aspartylphosphate). The 71-residue stretch at 611 to 681 (SEARWKAVYE…QRLANLLQGG (71 aa)) folds into the PAS 2 domain. The region spanning 685 to 737 (YSVERSYLCKNGSTIWANASVSLMPQRVGESPVILQIIDDITEKKQAQENLNQ) is the PAC 2 domain. One can recognise a Histidine kinase 2 domain in the interval 757-974 (YIAHEINQPL…CFLVSIPARQ (218 aa)). At His-760 the chain carries Phosphohistidine.

In terms of assembly, homodimer. Binds as a dimer to a pseudopalindromic sequence. In terms of processing, autophosphorylated. Activation requires a sequential transfer of a phosphate group from a His in the primary transmitter domain, to an Asp in the receiver domain and to a His in the secondary transmitter domain.

It is found in the cytoplasm. The catalysed reaction is ATP + protein L-histidine = ADP + protein N-phospho-L-histidine.. In terms of biological role, member of the two-component regulatory system TodS/TodT involved in the regulation of toluene degradation. Phosphorylates TodT via a four-step phosphorelay in response to toluene. The protein is Sensor histidine kinase TodS (todS) of Pseudomonas putida (strain ATCC 700007 / DSM 6899 / JCM 31910 / BCRC 17059 / LMG 24140 / F1).